The following is a 448-amino-acid chain: Proton extrusion protein PxcA (448 aa).

4 helical membrane-spanning segments follow: residues 231 to 251 (ILLLIIIPLLIHQLTKTFFLI), 323 to 343 (IDSIANIFADLFSFIAFVLVL), 372 to 392 (LIILFTDMFVGFHSPHGWEVI), and 408 to 428 (FNFLFIATFPVILDTVLKYWI).

This sequence belongs to the CemA family.

The protein localises to the cell inner membrane. In terms of biological role, required for H(+) efflux immediately after light irradiation to form a rapid H(+) concentration gradient across the thylakoid membranes. Together with PxcL, contributes to transient H(+) uptake following dark to light transition. The protein is Proton extrusion protein PxcA of Rippkaea orientalis (strain PCC 8801 / RF-1) (Cyanothece sp. (strain PCC 8801)).